The following is a 303-amino-acid chain: Aquaporin NIP1-2 (303 aa).

A disordered region spans residues 1–39 (MAGREDGAAAGAMEEGQDSKEVKCESSEDGSSSSSSSRC). Basic and acidic residues predominate over residues 17 to 26 (QDSKEVKCES). A run of 2 helical transmembrane segments spans residues 66-86 (ILAEILGTYFMIFAGCGAVVV) and 91-111 (GGAVTFPGICAVWGLVVMVLV). Residues 123–125 (NPA) carry the NPA 1 motif. 3 consecutive transmembrane segments (helical) span residues 145 to 165 (VVAQVLGSTMASLTLRVVFGG), 188 to 208 (AAALEFVISFFLMFVVSGVAT), and 212 to 232 (AIGELAGLAVGATVAVNVLFA). The NPA 2 signature appears at 241-243 (NPA). The helical transmembrane segment at 255–275 (YGGVWVYVAAPVSGTVCGAWA) threads the bilayer.

It belongs to the MIP/aquaporin (TC 1.A.8) family. NIP (TC 1.A.8.12) subfamily. Expressed in roots and leaves, and at lower levels in anthers.

It is found in the membrane. Its function is as follows. Aquaporins facilitate the transport of water and small neutral solutes across cell membranes. This is Aquaporin NIP1-2 (NIP1-2) from Oryza sativa subsp. japonica (Rice).